The following is a 1206-amino-acid chain: MNFRDHSISLDESKNACFQVIDWYHFDYTNEDSNESQYIIKMFGVTEEGYSLCVNVTDFQPHFYISSKTKDKFTQTELDDLEEYIINKLPYNFKNSLSVKQVRKKSIWGFTNNVYKQYIKLSFQNIMSMYITRKMLQYRIKVGRVQVQFDLNESNIDPFLRFIHIQNIKPGGWISIDEYTTDVDDELESKCQINITTSCENVQPLDCNKVAPVNIMSFDIECTSSSGDFPVPIKTYKKTAEEISDLYNSFKSDSHHDGFIPALYKCFMGIYTDEKEFMNDCGTYCNKNLLECNTNNIKFAKVYPKKKKIDLETIFQKLQGYTDTIVDILKNRSKHTVFQEENDGLEPSVVNQLEVLLNSFLPPLKGDPIIQIGSTIHQYGSTKCSYKNVITLDTCNDIPGVDVITCKTETALIKEWCKLIHRVDPDIMTGYNIFGFDFDYIYKRALELGCEKYVLGCSRLEGHKSKFKEKMLASSALGENLLKYVEMEGRVFVDLMKVVQREYNLDSYKLDNVASHFISGKVKTHNKTTLHLDSAAGINVGDYIKLNNTYKCMVLSVDSNIIVIDTELDEKIVTWGLAKDDVSPKEIFACQKGTSADRAKIAKYCVQDCALCNMLIIKLEVFANNMGMANVCLVPLSYIFMRGQGIKIFSLVAKQCRDDNFIIPLIKFDQDSEEVEGYEGAIVLDPIPGIYVEAPISVMDYASLYPSSMISENISHDSIVLDKKYDNLPGVEYVDVTYDIFTGVGDKKTKVDEKTCRYAQFKNNEKGVLPRILMKLLSQRKSTRKQILHKTVTTNDNRSFTGLVDENDDSVTIKTTDNNTITLSRNEILSSVDTYNDFMKAILDGLQLAYKITANSLYGQVGARTSPIYMKELAASTTATGRNLIMKAKEFMETNYGADVVYGDTDSIFVDFKVKEKYGLLDKDALQKSIDISVKASDAFKKELKAPHDLEYEKTFFPFIILSKKKYVGNLYEHDVNKYKQKSMGIVLKRRDNANIVKIVYGGIIDILLNRQNISFAINFLKESLRKLVNGEFHMDDLVITKTLRTTYKDPTRIAHKVLADRMRNRDPGSAPQSSDRVPYAYIEHDIKNKSLLQGDKIEHPSYIKENNVKIDYIFYITNQLMKPICQLMALALFQIPKSSKPEIYERKLKSLTLDYEGNKKRAIDKVSDLKQKEIQKLLFDETLVHLNNKRMGNREILEFFSVTPV.

This sequence belongs to the DNA polymerase type-B family.

The catalysed reaction is DNA(n) + a 2'-deoxyribonucleoside 5'-triphosphate = DNA(n+1) + diphosphate. This chain is DNA polymerase (dpo), found in Pyramimonas orientalis virus (PoV01).